Consider the following 163-residue polypeptide: Anthranilate 1,2-dioxygenase small subunit (163 aa).

The protein belongs to the bacterial ring-hydroxylating dioxygenase beta subunit family. In terms of assembly, the anthranilate dioxygenase (AntDO) multicomponent enzyme system is composed of an oxygenase component and a NADH:acceptor reductase component (AntC). The oxygenase component is a heterohexamer of 3 large (AntA) and 3 small (AntB) subunits.

The enzyme catalyses anthranilate + NADH + O2 + 3 H(+) = catechol + NH4(+) + CO2 + NAD(+). It catalyses the reaction anthranilate + NADPH + O2 + 3 H(+) = catechol + NH4(+) + CO2 + NADP(+). It participates in aromatic compound metabolism; anthranilate degradation via hydroxylation; catechol from anthranilate: step 1/1. Component of anthranilate dioxygenase multicomponent enzyme system which catalyzes the incorporation of both atoms of molecular oxygen into anthranilate to form catechol. This Acinetobacter baylyi (strain ATCC 33305 / BD413 / ADP1) protein is Anthranilate 1,2-dioxygenase small subunit.